Here is a 151-residue protein sequence, read N- to C-terminus: uncharacterized protein (151 aa).

The next 4 helical transmembrane spans lie at 22-42 (IVSITFIAAIALAVIFGGFFF), 62-82 (ALFILACFAVGLIIDPLTKII), 97-117 (LFAFILYFISNLITICFADYF), and 121-141 (IYIPDVLLVVISAFMAIIELA).

It localises to the cell membrane. This is an uncharacterized protein from Bacillus subtilis (strain 168).